We begin with the raw amino-acid sequence, 186 residues long: Putative manganese efflux pump MntP (186 aa).

6 helical membrane passes run 1–21 (MSFL…FAVS), 41–61 (VFFG…GSAV), 62–82 (SGFV…FIGG), 105–127 (LFLL…AFLG), 139–159 (CVTF…GHFF), and 163–183 (VEIL…AEHM).

Belongs to the MntP (TC 9.B.29) family.

The protein localises to the cell membrane. In terms of biological role, probably functions as a manganese efflux pump. The chain is Putative manganese efflux pump MntP from Methanosarcina mazei (strain ATCC BAA-159 / DSM 3647 / Goe1 / Go1 / JCM 11833 / OCM 88) (Methanosarcina frisia).